Here is a 301-residue protein sequence, read N- to C-terminus: GTPase Era (301 aa).

The Era-type G domain occupies 4-173 (KAGFVALIGK…LECISKHLIP (170 aa)). A G1 region spans residues 12–19 (GKPNAGKS). 12-19 (GKPNAGKS) lines the GTP pocket. Residues 38 to 42 (NATRK) form a G2 region. Residues 64 to 67 (DTPG) are G3. Residues 64-68 (DTPGL) and 122-125 (SKID) each bind GTP. The interval 122–125 (SKID) is G4. The segment at 152-154 (LSA) is G5. One can recognise a KH type-2 domain in the interval 204–280 (LSDEIPYESD…FLNLQVIAQK (77 aa)).

The protein belongs to the TRAFAC class TrmE-Era-EngA-EngB-Septin-like GTPase superfamily. Era GTPase family. Monomer.

The protein localises to the cytoplasm. It is found in the cell inner membrane. In terms of biological role, an essential GTPase that binds both GDP and GTP, with rapid nucleotide exchange. Plays a role in 16S rRNA processing and 30S ribosomal subunit biogenesis and possibly also in cell cycle regulation and energy metabolism. This chain is GTPase Era, found in Helicobacter pylori (strain HPAG1).